The following is a 384-amino-acid chain: ATP phosphoribosyltransferase regulatory subunit (384 aa).

This sequence belongs to the class-II aminoacyl-tRNA synthetase family. HisZ subfamily. As to quaternary structure, heteromultimer composed of HisG and HisZ subunits.

It is found in the cytoplasm. Its pathway is amino-acid biosynthesis; L-histidine biosynthesis; L-histidine from 5-phospho-alpha-D-ribose 1-diphosphate: step 1/9. Functionally, required for the first step of histidine biosynthesis. May allow the feedback regulation of ATP phosphoribosyltransferase activity by histidine. The polypeptide is ATP phosphoribosyltransferase regulatory subunit (Azoarcus sp. (strain BH72)).